Consider the following 223-residue polypeptide: Uracil-DNA glycosylase (223 aa).

The active-site Proton acceptor is D64.

It belongs to the uracil-DNA glycosylase (UDG) superfamily. UNG family.

Its subcellular location is the cytoplasm. The enzyme catalyses Hydrolyzes single-stranded DNA or mismatched double-stranded DNA and polynucleotides, releasing free uracil.. Excises uracil residues from the DNA which can arise as a result of misincorporation of dUMP residues by DNA polymerase or due to deamination of cytosine. The sequence is that of Uracil-DNA glycosylase from Desulfitobacterium hafniense (strain DSM 10664 / DCB-2).